The primary structure comprises 414 residues: Ornithine aminotransferase (414 aa).

Cys-154 and Cys-163 form a disulfide bridge. Residue Lys-262 is modified to N6-(pyridoxal phosphate)lysine.

This sequence belongs to the class-III pyridoxal-phosphate-dependent aminotransferase family. In terms of assembly, homodimer. It depends on pyridoxal 5'-phosphate as a cofactor. In terms of processing, the disulfide bond between Cys-154 and Cys-163 is reduced by TRX1 which increases OAT catalytic activity.

Its subcellular location is the cytoplasm. It catalyses the reaction a 2-oxocarboxylate + L-ornithine = L-glutamate 5-semialdehyde + an L-alpha-amino acid. The catalysed reaction is L-ornithine + 2-oxoglutarate = L-glutamate 5-semialdehyde + L-glutamate. It participates in amino-acid biosynthesis; L-proline biosynthesis; L-glutamate 5-semialdehyde from L-ornithine: step 1/1. Unlike for mammalian OATs, activity is increased by TRX1-mediated reduction of the disulfide bond between Cys-154 and Cys-163. Binding to TRX1 may also induce conformational changes that facilitate substrate binding. Catalyzes the transamination of alpha-ketoglutarate with ornithine or N-acetylornithine and of glutamate-5-semialdehyde with glutamate and alanine. The polypeptide is Ornithine aminotransferase (Plasmodium yoelii yoelii).